Reading from the N-terminus, the 986-residue chain is Anoctamin-1 (986 aa).

Residues Met-1–Ala-333 lie on the Cytoplasmic side of the membrane. The disordered stretch occupies residues Leu-79 to Glu-121. 2 positions are modified to phosphoserine: Ser-107 and Ser-196. A helical transmembrane segment spans residues Trp-334 to Leu-354. At Tyr-355–Asn-406 the chain is on the extracellular side. 4 disulfide bridges follow: Cys-370-Cys-395, Cys-379-Cys-862, Cys-382-Cys-386, and Cys-651-Cys-656. Residues Pro-407–Trp-427 traverse the membrane as a helical segment. Glu-425 contacts Ca(2+). Topologically, residues Lys-428–Asn-519 are cytoplasmic. Residues Leu-520 to Tyr-540 traverse the membrane as a helical segment. The Extracellular segment spans residues Arg-541–Ala-568. A helical transmembrane segment spans residues Val-569–Trp-589. At Leu-590–Ile-607 the chain is on the cytoplasmic side. Residues Phe-608 to Phe-628 form a helical membrane-spanning segment. Topologically, residues Lys-629–Leu-657 are extracellular. Residues Met-658–Leu-678 traverse the membrane as a helical segment. Residues Asn-677, Glu-680, Glu-728, Glu-731, Glu-760, and Asp-764 each contribute to the Ca(2+) site. At Phe-679–Leu-725 the chain is on the cytoplasmic side. A run of 2 helical transmembrane segments spans residues Thr-726–Phe-746 and Pro-747–Lys-767. Residues Phe-768–Gly-784 are Cytoplasmic-facing. The chain crosses the membrane as a helical span at residues Ile-785 to Ile-805. At Ser-806–Ala-892 the chain is on the extracellular side. Asn-832 is a glycosylation site (N-linked (GlcNAc...) asparagine). The chain crosses the membrane as a helical span at residues Phe-893–Pro-913. Ca(2+) contacts are provided by Asp-909 and Asp-914. Residues Asp-914 to Leu-986 lie on the Cytoplasmic side of the membrane. The segment covering Lys-951–Cys-960 has biased composition (basic and acidic residues). Positions Lys-951 to Leu-986 are disordered.

The protein belongs to the anoctamin family. Homodimer. Interacts with CFTR. Interacts with TRPV4. Expressed in nasal epithelial cells (at protein level). In the kidney, expressed in the collecting duct (at protein level). Broadly expressed with higher levels in liver, skeletal muscle and gastrointestinal muscles. Expressed in eccrine sweat glands.

The protein localises to the apical cell membrane. It localises to the presynapse. It catalyses the reaction chloride(in) = chloride(out). With respect to regulation, ATP and calmodulin are essential for its activation. Channel activity is inhibited by CFTR protein and by chloride inhibitors such as niflumic acid (NFA) and 4,4'-diisothiocyanatostilbene-2,2'-disulfonic acid (DIDS). Activated by heat with activation seen at temperatures above 44 degrees Celsius. Activated by BDNF in radial glial cells. In terms of biological role, calcium-activated chloride channel (CaCC). Plays a role in transepithelial anion transport and smooth muscle contraction. Required for the normal functioning of the interstitial cells of Cajal (ICCs) which generate electrical pacemaker activity in gastrointestinal smooth muscles. Acts as a major contributor to basal and stimulated chloride conductance in airway epithelial cells and plays an important role in tracheal cartilage development. Required for CFTR activation by enhancing endoplasmic reticulum Ca(2+) store release and is also required for CFTR membrane expression. Required for basal and ATP-dependent mucus secretion in airways and intestine, probably by controlling exocytosis of mucus-filled granules by providing Ca(2+) to an apical signaling compartment. Contributes to airway mucus expression induced by interleukins IL3 and IL8 and by the asthma-associated protein CLCA1 and is required for expression of mucin MUC5AC. However, was shown in another study not to be required for MUC5AC expression. Plays a role in the propagation of Ca(2+) waves in Kolliker's organ in the cochlea and contributes to the refinement of auditory brainstem circuitries prior to hearing onset. In vomeronasal sensory neurons, modulates spontaneous firing patterns in the absence of stimuli as well as the firing pattern of pheromone-evoked activity. Responsible for calcium-activated chloride channel activity in type I taste cells of the vallate papillae. Acts as a heat sensor in nociceptive neurons. In dorsal root ganglion neurons, plays a role in mediating non-histaminergic Mas-related G-protein coupled receptor (MRGPR)-dependent itching, acting as a downstream effector of MRGPRs. In the developing brain, required for the Ca(2+)-dependent process extension of radial glial cells. Its function is as follows. Calcium-activated chloride channel (CaCC). Contributes to calcium-activated chloride secretion in human sweat gland epithelial cells. Shows increased basal chloride permeability and decreased Ca(2+)-induced chloride permeability. Functionally, calcium-activated chloride channel (CaCC). Shows increased sensitivity to intracellular Ca(2+). In Homo sapiens (Human), this protein is Anoctamin-1 (ANO1).